Consider the following 187-residue polypeptide: Ribosome maturation factor RimP (187 aa).

Belongs to the RimP family.

Its subcellular location is the cytoplasm. Its function is as follows. Required for maturation of 30S ribosomal subunits. The sequence is that of Ribosome maturation factor RimP from Phenylobacterium zucineum (strain HLK1).